Here is a 2449-residue protein sequence, read N- to C-terminus: Nonribisomal peptide synthetase phqB (2449 aa).

The segment at 253-654 (IQVHSGPGRL…GRRDTVVKIR (402 aa)) is adenylation 1. The region spanning 795-870 (LPMTPNEDVL…LRTVAKEARP (76 aa)) is the Carrier 1 domain. O-(pantetheine 4'-phosphoryl)serine is present on Ser-815. A condensation 1 region spans residues 913–1337 (QDIYPTTPLQ…LISDRDSELL (425 aa)). The interval 1357–1756 (EAQVTRNPSK…TFTFLGRTNQ (400 aa)) is adenylation 2. One can recognise a Carrier 2 domain in the interval 1915–1993 (WALSKHIGQL…MVAEMIDRTP (79 aa)). At Ser-1952 the chain carries O-(pantetheine 4'-phosphoryl)serine. The reductase (R) domain stretch occupies residues 2041 to 2297 (LTGATGFLGT…VAAVDWVASL (257 aa)). Residues Thr-2045, Met-2249, and Asn-2259 each coordinate NADPH.

The protein belongs to the NRP synthetase family.

It participates in alkaloid biosynthesis. In terms of biological role, nonribisomal peptide synthetase; part of the gene cluster that mediates the biosynthesis of paraherquamide, a fungal indole alkaloid that belongs to a family of natural products containing a characteristic bicyclo[2.2.2]diazaoctane core. The first steps in the biosynthesis of paraherquamide is the production of the beta-methyl-proline precursor from L-isoleucine. They require oxidation of a terminally hydroxylated L-isoleucine to the corresponding aldehyde by enzymes which have still to be identified. Spontaneous cyclization and dehydration would yield the 4-methyl pyrolline-5-carboxylic acid, which is then reduced by the pyrroline-5-carboxylate reductase phqD leading to the beta-methyl-proline precursor. The next step of paraherquamide biosynthesis involves coupling of beta-methyl-proline and L-tryptophan by the bimodular NRPS phqB, to produce a monooxopiperazine intermediate. The reductase (R) domain of phqB utilizes NADPH for hydride transfer to reduce the thioester bond of the T domain-tethered linear dipeptide to a hemithioaminal intermediate, which spontaneously cleaves the C-S bond to release the aldehyde product. This compound undergoes spontaneous cyclization and dehydration to give a dienamine which is reverse prenylated at C-2 by the reverse prenyltransferase phqJ. The other prenyltransferase present in the cluster, phqI may be a redundant gene in the pathway. During biosynthetic assembly, the key step to produce the polycyclic core is catalyzed by the bifunctional reductase and intramolecular [4+2] Diels-Alderase, phqE, resulting in formation of the [2.2.2] diazaoctane intermediate preparaherquamide. Following formation of preparaherquamide, an indole 2,3-epoxidation-initiated pinacol-like rearrangement is catalyzed by the phqK FAD-dependent monooxygenase. The prenyltransferase phqA, the cytochrome P450 monooxygenase phqL, and the FAD-linked oxidoreductase phqH (or the cytochrome P450 monooxygenase phqM), are proposed to be involved in the formation of the pyran ring. The FAD-dependent monooxygenase phqK is likely responsible for generation of the spiro-oxindole, and the N-methylation is likely mediated by the phqN methyltransferase leading to the isolable natural product paraherquamide F. However, the order of these biosynthetic steps has still to be determined. In late-stage paraherquamide biosynthesis, the third P450 monooxygenase, phqO, is probably responsible for the C-14 hydroxylation, transforming paraherquamide F to paraherquamide G, and paraherquamide E to the final product paraherquamide A. The expansion from the 6-membered ring pyran (in paraherquamides F and G) to the 7-membered dioxepin ring (in paraherquamides A and E) represents a poorly understood but intriguing process that probably involves the 2-oxoglutarate-dependent dioxygenase phqC. Finally, the remaining members of the paraherquamide cluster, including phqI as well as phqM (or phqH), do not have a clearly prescribed role and appear to be redundant. The protein is Nonribisomal peptide synthetase phqB of Penicillium fellutanum.